Consider the following 422-residue polypeptide: 5'-deoxyadenosine deaminase (422 aa).

His57 and His59 together coordinate Zn(2+). Residues Glu86 and His178 each coordinate substrate. His205 serves as a coordination point for Zn(2+). The substrate site is built by Glu208 and Asp294. Asp294 contributes to the Zn(2+) binding site.

This sequence belongs to the metallo-dependent hydrolases superfamily. MTA/SAH deaminase family. Homotetramer. Requires Zn(2+) as cofactor.

The catalysed reaction is 5'-deoxyadenosine + H2O + H(+) = 5'-deoxyinosine + NH4(+). It catalyses the reaction S-adenosyl-L-homocysteine + H2O + H(+) = S-inosyl-L-homocysteine + NH4(+). It carries out the reaction S-methyl-5'-thioadenosine + H2O + H(+) = S-methyl-5'-thioinosine + NH4(+). The enzyme catalyses adenosine + H2O + H(+) = inosine + NH4(+). It participates in amino-acid biosynthesis; S-adenosyl-L-methionine biosynthesis. Its function is as follows. Catalyzes the deamination of three SAM-derived enzymatic products, namely 5'-deoxyadenosine, S-adenosyl-L-homocysteine, and 5'-methylthioadenosine, to produce the inosine analogs. Can also deaminate adenosine. The preferred substrate for this enzyme is 5'-deoxyadenosine, but all these substrates are efficiently deaminated. Likely functions in a S-adenosyl-L-methionine (SAM) recycling pathway from S-adenosyl-L-homocysteine (SAH) produced from SAM-dependent methylation reactions. May also be involved in the recycling of 5'-deoxyadenosine, whereupon the 5'-deoxyribose moiety of 5'-deoxyinosine is further metabolized to deoxyhexoses used for the biosynthesis of aromatic amino acids in methanogens. This is 5'-deoxyadenosine deaminase from Methanococcus maripaludis (strain C7 / ATCC BAA-1331).